Consider the following 330-residue polypeptide: MAALPVLAVTSGEPAGVGPELCARLLARDWPARLVVLGDADLIAARAAAVGSPIAVRHYSRGQAQAAGVLEVLHIPLAEPSDAGRLAVGNARYVLALLDRALAGCVGGEFAGMVTAPVHKGVICESGIAFSGHTEYLAEHTATPLVVMMLVGGGMRVALATTHLPLAAVSAAITRPVLEQTLRILHADLVQRFGIAAPRILVAGLNPHAGEGGHMGREEIEVITPVLDRLRAEGLQLVGPLPADTLFAPHTLAHGDAVLAMYHDQGLPVLKHASFGGGVNVTLGLPVIRTSVDHGTALDLAGSGRADPGSLYAAVELAVSMAEARARQPR.

Residues His-133 and Thr-134 each contribute to the substrate site. Residues His-163, His-208, and His-263 each coordinate a divalent metal cation. Substrate contacts are provided by Lys-271, Asn-280, and Arg-289.

It belongs to the PdxA family. Homodimer. Requires Zn(2+) as cofactor. Mg(2+) serves as cofactor. The cofactor is Co(2+).

Its subcellular location is the cytoplasm. The enzyme catalyses 4-(phosphooxy)-L-threonine + NAD(+) = 3-amino-2-oxopropyl phosphate + CO2 + NADH. Its pathway is cofactor biosynthesis; pyridoxine 5'-phosphate biosynthesis; pyridoxine 5'-phosphate from D-erythrose 4-phosphate: step 4/5. Catalyzes the NAD(P)-dependent oxidation of 4-(phosphooxy)-L-threonine (HTP) into 2-amino-3-oxo-4-(phosphooxy)butyric acid which spontaneously decarboxylates to form 3-amino-2-oxopropyl phosphate (AHAP). The sequence is that of 4-hydroxythreonine-4-phosphate dehydrogenase from Azoarcus sp. (strain BH72).